The sequence spans 465 residues: MVMIETFLGMAKYLSPREDDDWSDRLNYLMTPNILLAFSVLISFKQFGGRPIECMFPNKFPGSWEQYAENYCWSQDTYFVEPTQDVSLLKKEERYTPDRQLSYYQWVPFFLLLQAAFFRAPSYLWKYFSNHSGIRIHEVVEKAKDSANVEEEVREKNILILKRHLSSALRFQANMERKKVQVHKTVTFLNFQYSSGFISWIYLFTKVLYFLNVFAQLYLMNYFLGTNRHHWYGFGVVQDIVQGEPWERSGYFPRAAVCDFEVRQVANIQRYSVQCVLVINIFNEKIFVLLWFWYVILLLSSTVSLVQWFIVLVFPCFSKWFVKQHLALSTLQNFNQRNSRREDSDVSKFVTQYLHKDGVFVLRMVSSHAGIIFATDLVQALYEAYDFQDKNKDVQGSPVSDDLQTISTGAESSIRQRKTRKGSRIEYKAGFPISTSLMPDKDDIESSSTSSEEDQKRVSNVITNI.

A run of 4 helical transmembrane segments spans residues 29–49 (LMTP…QFGG), 105–125 (QWVP…SYLW), 195–215 (SGFI…NVFA), and 286–306 (IFVL…VSLV). The segment at 433 to 465 (ISTSLMPDKDDIESSSTSSEEDQKRVSNVITNI) is disordered.

Belongs to the pannexin family.

The protein localises to the cell membrane. The protein resides in the cell junction. It is found in the gap junction. Functionally, structural component of the gap junctions. The chain is Innexin-11 (inx-11) from Caenorhabditis elegans.